Consider the following 492-residue polypeptide: Ketol-acid reductoisomerase (NADP(+)) (492 aa).

The KARI N-terminal Rossmann domain occupies 15 to 208; the sequence is AQLGKCRFMA…GGDRAGVLES (194 aa). Residues 45–48, R68, R76, S78, and 108–110 contribute to the NADP(+) site; these read CGAQ and DKQ. The active site involves H132. Residue G158 coordinates NADP(+). KARI C-terminal knotted domains follow at residues 209-344 and 345-485; these read SFVA…KAPP and FEGK…MTDM. Residues D217, E221, E389, and E393 each contribute to the Mg(2+) site. S414 contacts substrate.

This sequence belongs to the ketol-acid reductoisomerase family. Requires Mg(2+) as cofactor.

It carries out the reaction (2R)-2,3-dihydroxy-3-methylbutanoate + NADP(+) = (2S)-2-acetolactate + NADPH + H(+). The enzyme catalyses (2R,3R)-2,3-dihydroxy-3-methylpentanoate + NADP(+) = (S)-2-ethyl-2-hydroxy-3-oxobutanoate + NADPH + H(+). It functions in the pathway amino-acid biosynthesis; L-isoleucine biosynthesis; L-isoleucine from 2-oxobutanoate: step 2/4. Its pathway is amino-acid biosynthesis; L-valine biosynthesis; L-valine from pyruvate: step 2/4. In terms of biological role, involved in the biosynthesis of branched-chain amino acids (BCAA). Catalyzes an alkyl-migration followed by a ketol-acid reduction of (S)-2-acetolactate (S2AL) to yield (R)-2,3-dihydroxy-isovalerate. In the isomerase reaction, S2AL is rearranged via a Mg-dependent methyl migration to produce 3-hydroxy-3-methyl-2-ketobutyrate (HMKB). In the reductase reaction, this 2-ketoacid undergoes a metal-dependent reduction by NADPH to yield (R)-2,3-dihydroxy-isovalerate. This is Ketol-acid reductoisomerase (NADP(+)) from Edwardsiella ictaluri (strain 93-146).